Here is a 106-residue protein sequence, read N- to C-terminus: ATP-dependent Clp protease adapter protein ClpS (106 aa).

Positions 1-22 (MTDEPNQDDPQGPEVEAAKPSL) are disordered.

This sequence belongs to the ClpS family. Binds to the N-terminal domain of the chaperone ClpA.

Involved in the modulation of the specificity of the ClpAP-mediated ATP-dependent protein degradation. This chain is ATP-dependent Clp protease adapter protein ClpS, found in Halorhodospira halophila (strain DSM 244 / SL1) (Ectothiorhodospira halophila (strain DSM 244 / SL1)).